Consider the following 1111-residue polypeptide: ATP-dependent DNA helicase mph1 (1111 aa).

Acidic residues-rich tracts occupy residues Met1–Asp18 and Val47–Gln65. Disordered regions lie at residues Met1–Glu81, Phe101–Asp144, Ala210–Arg240, and Ile259–His280. Composition is skewed to polar residues over residues Pro132 to Pro143 and Leu215 to Thr238. Positions Ile306–Lys474 constitute a Helicase ATP-binding domain. An ATP-binding site is contributed by Leu319–Thr326. Residues Asp422–His425 carry the DEAH box motif. Residues Tyr644–Thr818 enclose the Helicase C-terminal domain. 3 disordered regions span residues Ile836–Thr898, Ser998–Glu1047, and Ala1092–Glu1111. Over residues Lys852–Phe864 the composition is skewed to basic residues.

This sequence belongs to the DEAD box helicase family. DEAH subfamily. FANCM sub-subfamily. Interacts with the MHF histone-fold complex to form the FANCM-MHF complex.

It is found in the nucleus. The catalysed reaction is ATP + H2O = ADP + phosphate + H(+). Functionally, ATP-dependent DNA helicase involved in DNA damage repair by homologous recombination and in genome maintenance. Capable of unwinding D-loops. Plays a role in limiting crossover recombinants during mitotic DNA double-strand break (DSB) repair. Component of a FANCM-MHF complex which promotes gene conversion at blocked replication forks, probably by reversal of the stalled fork. The polypeptide is ATP-dependent DNA helicase mph1 (Neosartorya fischeri (strain ATCC 1020 / DSM 3700 / CBS 544.65 / FGSC A1164 / JCM 1740 / NRRL 181 / WB 181) (Aspergillus fischerianus)).